Consider the following 120-residue polypeptide: Large ribosomal subunit protein uL18 (120 aa).

A disordered region spans residues 1 to 24 (MITKAAKNATRKKRHARVRAKLTG). Basic residues predominate over residues 9 to 20 (ATRKKRHARVRA).

It belongs to the universal ribosomal protein uL18 family. Part of the 50S ribosomal subunit; part of the 5S rRNA/L5/L18/L25 subcomplex. Contacts the 5S and 23S rRNAs.

This is one of the proteins that bind and probably mediate the attachment of the 5S RNA into the large ribosomal subunit, where it forms part of the central protuberance. This chain is Large ribosomal subunit protein uL18, found in Bacillus mycoides (strain KBAB4) (Bacillus weihenstephanensis).